The chain runs to 505 residues: Envelope glycoprotein C homolog (505 aa).

An N-terminal signal peptide occupies residues 1–27 (MLTPRVLRALGWTGLFFLLLSPSNVLG). Topologically, residues 28-464 (ASLSRDLEHP…DATPSARGTP (437 aa)) are virion surface. Residue Asn45 is glycosylated (N-linked (GlcNAc...) asparagine; by host). A disordered region spans residues 51 to 85 (APLTEVPHAPSTESVSTNSESTNEHTITETTGKNA). A compositionally biased stretch (low complexity) spans 61 to 71 (STESVSTNSES). Asn90, Asn99, Asn119, Asn211, Asn353, Asn399, and Asn428 each carry an N-linked (GlcNAc...) asparagine; by host glycan. Residues 257–355 (PASVDVLAPP…GDMISTTNAT (99 aa)) form the Ig-like domain. The chain crosses the membrane as a helical span at residues 465–491 (MVITVNGSFGIGCNFRVGDNHDCPMFI). Over 492 to 505 (HSTRKIFDYNLIVM) the chain is Cytoplasmic.

Belongs to the herpesviridae glycoprotein C family.

Its subcellular location is the secreted. It is found in the host cell membrane. Its function is as follows. May play an immunoevasive role in the pathogenesis of Marek's disease. It is a candidate for causing the early-stage immunosuppression that occurs after MDHV infection. The polypeptide is Envelope glycoprotein C homolog (gC) (Gallid herpesvirus 2 (strain GA) (GaHV-2)).